We begin with the raw amino-acid sequence, 227 residues long: Ornithine decarboxylase antizyme 1 (227 aa).

Belongs to the ODC antizyme family. As to quaternary structure, interacts with ODC1 and thereby sterically blocks ODC homodimerization. Forms a ternary complex with PSMB4 and OAZ1 before PSMB4 is incorporated into the 20S proteasome. Interacts with AZIN2; this interaction disrupts the interaction between the antizyme and ODC1. Interacts with FAM171A1.

Functionally, ornithine decarboxylase (ODC) antizyme protein that negatively regulates ODC activity and intracellular polyamine biosynthesis and uptake in response to increased intracellular polyamine levels. Binds to ODC monomers, inhibiting the assembly of the functional ODC homodimer, and targets the monomers for ubiquitin-independent proteolytic destruction by the 26S proteasome. Triggers ODC degradation by inducing the exposure of a cryptic proteasome-interacting surface of ODC. Stabilizes AZIN2 by interfering with its ubiquitination. Also inhibits cellular uptake of polyamines by inactivating the polyamine uptake transporter. SMAD1/OAZ1/PSMB4 complex mediates the degradation of the CREBBP/EP300 repressor SNIP1. Involved in the translocation of AZIN2 from ER-Golgi intermediate compartment (ERGIC) to the cytosol. This Mus musculus (Mouse) protein is Ornithine decarboxylase antizyme 1 (Oaz1).